Consider the following 626-residue polypeptide: (+)-3-carene synthase 1, chloroplastic (626 aa).

The transit peptide at 1-45 (MSLISAVPLASSCVSKSLISSVREHTALRRAIATLQMSRRGKSVA) directs the protein to the chloroplast. Positions 377, 381, and 529 each coordinate Mg(2+). The DDXXD motif motif lies at 377–381 (DDMYD).

Belongs to the terpene synthase family. Tpsd subfamily. Mg(2+) is required as a cofactor. It depends on Mn(2+) as a cofactor.

Its subcellular location is the plastid. The protein localises to the chloroplast. It carries out the reaction (2E)-geranyl diphosphate = (+)-car-3-ene + diphosphate. The catalysed reaction is (2E)-geranyl diphosphate = terpinolene + diphosphate. It functions in the pathway terpene metabolism; oleoresin biosynthesis. Its pathway is secondary metabolite biosynthesis; terpenoid biosynthesis. Functionally, monoterpene synthase (TPS) involved in the biosynthesis of monoterpene natural products included in conifer oleoresin secretions and volatile emissions; these compounds contribute to biotic and abiotic stress defense against herbivores and pathogens. Catalyzes the conversion of (2E)-geranyl diphosphate (GPP) to (+)-car-3-ene and, to a lower extent, to terpinolene. In Pinus contorta (Shore pine), this protein is (+)-3-carene synthase 1, chloroplastic.